Consider the following 1351-residue polypeptide: Bromodomain-containing protein 4A (1351 aa).

7 disordered regions span residues 1-23 (MSSE…GIEG), 35-58 (PQPQ…QPKR), 168-244 (ETEL…RPPA), 285-368 (AAQP…DTKT), 478-638 (EPEE…PMSY), 700-799 (CLRK…LDSS), and 821-1334 (PDLP…PSID). In terms of domain architecture, Bromo 1 spans 58–164 (RQTNQLQYLL…KLFLQKISEM (107 aa)). The span at 208 to 219 (VKPPVTPVSKPS) shows a compositional bias: low complexity. Residues 220 to 235 (TPTPPTVTRAPTPPQT) show a composition bias toward pro residues. Positions 327–343 (PRKENGRQIRPTKKTEV) are enriched in basic and acidic residues. Over residues 349-359 (PAPPVLHPQPA) the composition is skewed to pro residues. In terms of domain architecture, Bromo 2 spans 366–475 (TKTSEQLRYC…DVFEMRFAKM (110 aa)). A compositionally biased stretch (pro residues) spans 482 to 504 (APAPVPSLAPGPPAPSIKGPPPT). An NPS region region spans residues 504 to 522 (TSSDSSSDSTSDSESSSDS). The segment covering 505–517 (SSDSSSDSTSDSE) has biased composition (low complexity). The tract at residues 543–598 (QLAALSQPQPNKPKKKEREKRKEKHKRKEEVEEPRKGRIREPPAKKPKKSVQGSGG) is BID region. Positions 554–569 (KPKKKEREKRKEKHKR) are enriched in basic residues. Residues 570-586 (KEEVEEPRKGRIREPPA) are compositionally biased toward basic and acidic residues. A compositionally biased stretch (pro residues) spans 607–621 (PPPAPRPARPAPPSA). One can recognise an NET domain in the interval 624–708 (ESSEEETQRC…SCLRKKRKSQ (85 aa)). Basic and acidic residues predominate over residues 629–638 (ETQRCRPMSY). Residues 725 to 738 (SSSESESSSESSTS) show a composition bias toward low complexity. The segment covering 751-767 (QKKKGHSGRESRKHHHP) has biased composition (basic residues). Residues 788–799 (PSYPLPSSLDSS) show a composition bias toward low complexity. A compositionally biased stretch (pro residues) spans 872–890 (PAMPPSASPPPPAPQPPQQ). Over residues 892–902 (HVHHHHHHHAQ) the composition is skewed to basic residues. Residues 927-953 (LQKSQQPPTQSPIHSLLTSVKVQSQTP) are compositionally biased toward polar residues. Pro residues predominate over residues 968 to 983 (VYPPPPSTATTAPPPA). Composition is skewed to low complexity over residues 994 to 1003 (PVVPQQLPAG) and 1011 to 1028 (QQQQ…SHQQ). The C-terminal (CTD) region stretch occupies residues 1051 to 1350 (RQQKQETYPG…LMEIFEQNLF (300 aa)). Residues 1075–1089 (PPVPPYPGLTHPPSP) show a composition bias toward pro residues. 2 stretches are compositionally biased toward basic and acidic residues: residues 1150 to 1161 (PRPDLKKMDGGR) and 1176 to 1197 (PEKE…DIKI). Over residues 1214–1224 (PTSAGKSTSDS) the composition is skewed to polar residues. A compositionally biased stretch (basic and acidic residues) spans 1226 to 1284 (ELFRRQAREKEERERALKLQAEQAERVRREQDRMSRTREDDEVQDQARKAHEEARRRQE). A compositionally biased stretch (low complexity) spans 1301–1310 (SPAQSSQPMM). A compositionally biased stretch (basic and acidic residues) spans 1311–1323 (DQREMARKREQER).

Belongs to the BET family.

Its subcellular location is the nucleus. The protein resides in the chromosome. Chromatin reader protein that recognizes and binds acetylated histones and plays a key role in transmission of epigenetic memory across cell divisions and transcription regulation. Remains associated with acetylated chromatin throughout the entire cell cycle and provides epigenetic memory for postmitotic G1 gene transcription by preserving acetylated chromatin status and maintaining high-order chromatin structure. During interphase, plays a key role in regulating the transcription of signal-inducible genes by associating with the P-TEFb complex and recruiting it to promoters. The sequence is that of Bromodomain-containing protein 4A (brd4-a) from Xenopus laevis (African clawed frog).